The primary structure comprises 348 residues: Phosphoribosylformylglycinamidine cyclo-ligase (348 aa).

The protein belongs to the AIR synthase family.

Its subcellular location is the cytoplasm. It catalyses the reaction 2-formamido-N(1)-(5-O-phospho-beta-D-ribosyl)acetamidine + ATP = 5-amino-1-(5-phospho-beta-D-ribosyl)imidazole + ADP + phosphate + H(+). It functions in the pathway purine metabolism; IMP biosynthesis via de novo pathway; 5-amino-1-(5-phospho-D-ribosyl)imidazole from N(2)-formyl-N(1)-(5-phospho-D-ribosyl)glycinamide: step 2/2. This Geobacter metallireducens (strain ATCC 53774 / DSM 7210 / GS-15) protein is Phosphoribosylformylglycinamidine cyclo-ligase.